The sequence spans 44 residues: Thymosin beta-4, Y-chromosomal (44 aa).

A disordered region spans residues 1–44; it reads MSDKPGMAEIEKFDKSKLKKTETQEKNPLSSKETIEQERQAGES. Basic and acidic residues-rich tracts occupy residues 9–25 and 33–44; these read EIEKFDKSKLKKTETQE and ETIEQERQAGES.

The protein belongs to the thymosin beta family. Ubiquitous.

The protein resides in the cytoplasm. Its subcellular location is the cytoskeleton. Plays an important role in the organization of the cytoskeleton. Binds to and sequesters actin monomers (G actin) and therefore inhibits actin polymerization. This is Thymosin beta-4, Y-chromosomal (TMSB4Y) from Homo sapiens (Human).